Consider the following 285-residue polypeptide: NADPH-dependent 7-cyano-7-deazaguanine reductase (285 aa).

Position 91–93 (91–93 (IES)) interacts with substrate. 93-94 (SK) is a binding site for NADPH. Catalysis depends on cysteine 193, which acts as the Thioimide intermediate. Aspartate 200 (proton donor) is an active-site residue. 232 to 233 (HE) is a substrate binding site. Residue 261 to 262 (RG) coordinates NADPH.

This sequence belongs to the GTP cyclohydrolase I family. QueF type 2 subfamily. In terms of assembly, homodimer.

It localises to the cytoplasm. It catalyses the reaction 7-aminomethyl-7-carbaguanine + 2 NADP(+) = 7-cyano-7-deazaguanine + 2 NADPH + 3 H(+). It functions in the pathway tRNA modification; tRNA-queuosine biosynthesis. Its function is as follows. Catalyzes the NADPH-dependent reduction of 7-cyano-7-deazaguanine (preQ0) to 7-aminomethyl-7-deazaguanine (preQ1). The protein is NADPH-dependent 7-cyano-7-deazaguanine reductase of Shewanella frigidimarina (strain NCIMB 400).